The sequence spans 317 residues: Melanocyte-stimulating hormone receptor (317 aa).

At 1-37 (MPVQGSQRRLLGSLNSTPTATPHLGLAANQTGARCLE) the chain is on the extracellular side. The N-linked (GlcNAc...) asparagine glycan is linked to asparagine 29. A helical membrane pass occupies residues 38-63 (VSVPDGLFLSLGLVSLVENVLVVTAI). The Cytoplasmic portion of the chain corresponds to 64 to 72 (AKNRNLHSP). A helical membrane pass occupies residues 73–93 (MYCFICCLALSDLLVSGSNML). At 94-118 (ETAVTLLLEAGALAARAAVVQQLDN) the chain is on the extracellular side. A helical membrane pass occupies residues 119–140 (VIDVITCSSMLSSLCFLGAIAV). Residues 141 to 163 (DRYISIFYALRYHSIVTLPRARR) lie on the Cytoplasmic side of the membrane. A helical membrane pass occupies residues 164-183 (AVAAIWVASVLFSTLFIAYY). Residues 184 to 191 (DHAAVLLC) lie on the Extracellular side of the membrane. The chain crosses the membrane as a helical span at residues 192–211 (LVIFFLAMLVLMAVLYVHML). Residues 212–240 (ARACQHAQGIARLHKRQRLAHQGFGLKGA) lie on the Cytoplasmic side of the membrane. Residues 241–266 (ATLTILLGIFFLCWGPFFLHLTLIVL) traverse the membrane as a helical segment. Over 267–279 (CPQHPTCSCIFKN) the chain is Extracellular. Residues 280 to 300 (FNLFLALIICNAIIDPLIYAF) form a helical membrane-spanning segment. The Cytoplasmic portion of the chain corresponds to 301 to 317 (RSQELRRTLKEVLLCSW). A lipid anchor (S-palmitoyl cysteine) is attached at cysteine 315.

Belongs to the G-protein coupled receptor 1 family. Interacts with MGRN1, but does not undergo MGRN1-mediated ubiquitination; this interaction competes with GNAS-binding and thus inhibits agonist-induced cAMP production. Interacts with OPN3; the interaction results in a decrease in MC1R-mediated cAMP signaling and ultimately a decrease in melanin production in melanocytes.

Its subcellular location is the cell membrane. In terms of biological role, receptor for MSH (alpha, beta and gamma) and ACTH. The activity of this receptor is mediated by G proteins which activate adenylate cyclase. Mediates melanogenesis, the production of eumelanin (black/brown) and phaeomelanin (red/yellow), via regulation of cAMP signaling in melanocytes. This Papio hamadryas (Hamadryas baboon) protein is Melanocyte-stimulating hormone receptor (MC1R).